Here is a 305-residue protein sequence, read N- to C-terminus: uncharacterized protein (305 aa).

A run of 10 helical transmembrane segments spans residues 4–24 (LNIY…FNLA), 38–58 (AWRF…TEGI), 67–87 (AVSY…LFFV), 95–115 (VNGA…ARII), 125–145 (VLGI…GSIE), 152–172 (ISGG…YGVL), 183–203 (LSTT…VSLF), 215–235 (IGVW…GYLW), 250–270 (LFFN…GTPI), and 272–292 (VFQV…SGVI). 2 consecutive EamA domains span residues 15-140 (IFTG…LVIT) and 164-290 (VCWA…TASG).

Belongs to the EamA transporter family.

It is found in the cell membrane. This is an uncharacterized protein from Bacillus subtilis (strain 168).